A 130-amino-acid polypeptide reads, in one-letter code: Peptide methionine sulfoxide reductase MsrB (130 aa).

In terms of domain architecture, MsrB spans 8–130; sequence LEEWRSMLDP…NSVCLDLVPR (123 aa). Zn(2+) is bound by residues Cys-47, Cys-50, Cys-96, and Cys-99. Cys-119 acts as the Nucleophile in catalysis.

This sequence belongs to the MsrB Met sulfoxide reductase family. Zn(2+) serves as cofactor.

The enzyme catalyses L-methionyl-[protein] + [thioredoxin]-disulfide + H2O = L-methionyl-(R)-S-oxide-[protein] + [thioredoxin]-dithiol. This Pseudomonas fluorescens (strain ATCC BAA-477 / NRRL B-23932 / Pf-5) protein is Peptide methionine sulfoxide reductase MsrB.